A 543-amino-acid polypeptide reads, in one-letter code: Efflux pump mokI (543 aa).

Helical transmembrane passes span 30-50 (LVVTSVTLVVFLMLLDMSIIV), 90-110 (LLTLKYTFLAFLGVFEVGSAL), 125-145 (AVAGMGGSGLTNGAITILASA), 153-173 (LLIGIMMGLSQIAIVCGPLLG), 185-205 (CFYINLPVGALAAILLLAIHI), 233-253 (LLGFVLFAAFAVMISLALEWG), 261-281 (SSVIIGLFCGAGISLVVFGFW), 307-327 (LFLGFFSGALLTFSYYLPIYF), 340-360 (VYMLPGIGGQIVMAIVSGAII), 364-384 (GYYIPWALASGIIVSISAGLV), 394-416 (AAWVMYQFMGGFGRGCGMQTPII), 428-448 (ALGISLAMFGQTFGGSLFLTL), and 509-529 (VGASGATFLFAWGMGQVGLIW).

It belongs to the major facilitator superfamily. TCR/Tet family.

It localises to the membrane. Efflux pump; part of the gene cluster that mediates the biosynthesis of monakolin K, also known as lovastatin, and which acts as a potent competitive inhibitor of HMG-CoA reductase. This is Efflux pump mokI from Monascus pilosus (Red mold).